The primary structure comprises 214 residues: Redox-sensing transcriptional repressor Rex (214 aa).

The segment at residues L17 to F56 is a DNA-binding region (H-T-H motif). G91 to G96 serves as a coordination point for NAD(+).

This sequence belongs to the transcriptional regulatory Rex family. Homodimer.

It is found in the cytoplasm. Functionally, modulates transcription in response to changes in cellular NADH/NAD(+) redox state. In Streptococcus pyogenes serotype M1, this protein is Redox-sensing transcriptional repressor Rex.